A 1053-amino-acid polypeptide reads, in one-letter code: MSRRKQAKPQHINSEEDQGEQQPQQQTPEFADAAPAAPAAGELGAPVNHPGNDEVASEDEATVKRLRREETHVCEKCCAEFFSISEFLEHKKNCTKNPPVLIMNDSEGPVPSEDFSGAVLSHQPTSPGSKDCHRENGGSSEDMKEKPDAESVVYLKTETALPPTPQDISYLAKGKVANTNVTLQALRGTKVAVNQRSADALPAPVPGANSIPWVLEQILCLQQQQLQQIQLTEQIRIQVNMWASHALHSSGAGADTLKTLGSHMSQQVSAAVALLSQKAGSQGLSLDALKQAKLPHANIPSATSSLSPGLAPFTLKPDGTRVLPNVMSRLPSALLPQAPGSVLFQSPFSTVALDTSKKGKGKPPNISAVDVKPKDEAALYKHKCKYCSKVFGTDSSLQIHLRSHTGERPFVCSVCGHRFTTKGNLKVHFHRHPQVKANPQLFAEFQDKVAAGNGIPYALSVPDPIDEPSLSLDSKPVLVTTSVGLPQNLSSGTNPKDLTGGSLPGDLQPGPSPESEGGPTLPGVGPNYNSPRAGGFQGSGTPEPGSETLKLQQLVENIDKATTDPNECLICHRVLSCQSSLKMHYRTHTGERPFQCKICGRAFSTKGNLKTHLGVHRTNTSIKTQHSCPICQKKFTNAVMLQQHIRMHMGGQIPNTPLPENPCDFTGSEPMTVGENGSTGAICHDDVIESIDVEEVSSQEAPSSSSKVPTPLPSIHSASPTLGFAMMASLDAPGKVGPAPFNLQRQGSRENGSVESDGLTNDSSSLMGDQEYQSRSPDILETTSFQALSPANSQAESIKSKSPDAGSKAESSENSRTEMEGRSSLPSTFIRAPPTYVKVEVPGTFVGPSTLSPGMTPLLAAQPRRQAKQHGCTRCGKNFSSASALQIHERTHTGEKPFVCNICGRAFTTKGNLKVHYMTHGANNNSARRGRKLAIENTMALLGTDGKRVSEIFPKEILAPSVNVDPVVWNQYTSMLNGGLAVKTNEISVIQSGGVPTLPVSLGATSVVNNATVSKMDGSQSGISADVEKPSATDGVPKHQFPHFLEENKIAVS.

The segment at 1–62 is disordered; the sequence is MSRRKQAKPQ…DEVASEDEAT (62 aa). Residues 20-46 are compositionally biased toward low complexity; sequence EQQPQQQTPEFADAAPAAPAAGELGAP. Ser-57 is modified (phosphoserine). A C2H2-type 1; atypical zinc finger spans residues 72 to 94; sequence HVCEKCCAEFFSISEFLEHKKNC. A disordered region spans residues 116–149; it reads SGAVLSHQPTSPGSKDCHRENGGSSEDMKEKPDA. The segment covering 130 to 149 has biased composition (basic and acidic residues); the sequence is KDCHRENGGSSEDMKEKPDA. A Glycyl lysine isopeptide (Lys-Gly) (interchain with G-Cter in SUMO1); alternate cross-link involves residue Lys-156. Residue Lys-156 forms a Glycyl lysine isopeptide (Lys-Gly) (interchain with G-Cter in SUMO2); alternate linkage. Residues Lys-175, Lys-190, and Lys-290 each participate in a glycyl lysine isopeptide (Lys-Gly) (interchain with G-Cter in SUMO2) cross-link. Position 307 is a phosphoserine (Ser-307). Residue Lys-316 forms a Glycyl lysine isopeptide (Lys-Gly) (interchain with G-Cter in SUMO1); alternate linkage. A Glycyl lysine isopeptide (Lys-Gly) (interchain with G-Cter in SUMO2); alternate cross-link involves residue Lys-316. A Glycyl lysine isopeptide (Lys-Gly) (interchain with G-Cter in SUMO2) cross-link involves residue Lys-372. Residue Lys-374 forms a Glycyl lysine isopeptide (Lys-Gly) (interchain with G-Cter in SUMO1); alternate linkage. Residue Lys-374 forms a Glycyl lysine isopeptide (Lys-Gly) (interchain with G-Cter in SUMO2); alternate linkage. 2 C2H2-type zinc fingers span residues 382–404 and 410–432; these read HKCK…LRSH and FVCS…FHRH. Lys-436 participates in a covalent cross-link: Glycyl lysine isopeptide (Lys-Gly) (interchain with G-Cter in SUMO2). Residues 483 to 496 are compositionally biased toward polar residues; it reads VGLPQNLSSGTNPK. Positions 483–546 are disordered; it reads VGLPQNLSSG…QGSGTPEPGS (64 aa). Thr-541 carries the post-translational modification Phosphothreonine. Residue Lys-550 forms a Glycyl lysine isopeptide (Lys-Gly) (interchain with G-Cter in SUMO2) linkage. 2 consecutive C2H2-type zinc fingers follow at residues 566-588 and 594-616; these read NECL…YRTH and FQCK…LGVH. Residues Lys-597 and Lys-623 each participate in a glycyl lysine isopeptide (Lys-Gly) (interchain with G-Cter in SUMO2) cross-link. A C2H2-type 6 zinc finger spans residues 626-648; sequence HSCPICQKKFTNAVMLQQHIRMH. Disordered stretches follow at residues 694 to 714, 736 to 776, and 788 to 828; these read EEVS…PLPS, VGPA…QSRS, and LSPA…LPST. The segment covering 698–708 has biased composition (low complexity); it reads SQEAPSSSSKV. 2 stretches are compositionally biased toward polar residues: residues 743-776 and 788-797; these read LQRQ…QSRS and LSPANSQAES. Phosphoserine occurs at positions 776 and 789. Basic and acidic residues predominate over residues 810 to 821; it reads ESSENSRTEMEG. A Glycyl lysine isopeptide (Lys-Gly) (interchain with G-Cter in SUMO1); alternate cross-link involves residue Lys-838. A Glycyl lysine isopeptide (Lys-Gly) (interchain with G-Cter in SUMO2); alternate cross-link involves residue Lys-838. Position 852 is a phosphoserine (Ser-852). The segment at 870 to 892 adopts a C2H2-type 7 zinc-finger fold; the sequence is HGCTRCGKNFSSASALQIHERTH. A Glycyl lysine isopeptide (Lys-Gly) (interchain with G-Cter in SUMO2) cross-link involves residue Lys-896. A C2H2-type 8 zinc finger spans residues 898–920; that stretch reads FVCNICGRAFTTKGNLKVHYMTH. Glycyl lysine isopeptide (Lys-Gly) (interchain with G-Cter in SUMO2) cross-links involve residues Lys-932 and Lys-947. A disordered region spans residues 1018-1039; the sequence is GSQSGISADVEKPSATDGVPKH. Ser-1019 carries the phosphoserine modification.

It belongs to the sal C2H2-type zinc-finger protein family. In terms of assembly, interacts with POU5F1/OCT4. Interacts with NANOG. Interacts with BEND3. Interacts with NSD2 (via PHD-type zinc fingers 1, 2 and 3). Interacts with NRBP1. Isoform SALL4B exists primarily as a ubiquitinated form. In terms of processing, sumoylation with both SUMO1 and SUMO2 regulates the stability, subcellular localization, transcriptional activity, and may reduce interaction with POU5F1/OCT4. As to expression, expressed in testis. Constitutively expressed in acute myeloid leukemia (AML).

The protein resides in the cytoplasm. It is found in the nucleus. In terms of biological role, transcription factor with a key role in the maintenance and self-renewal of embryonic and hematopoietic stem cells. The protein is Sal-like protein 4 (SALL4) of Homo sapiens (Human).